Reading from the N-terminus, the 294-residue chain is UPF0761 membrane protein YPN_0254 (294 aa).

A run of 7 helical transmembrane segments spans residues 44–64 (LLSL…FPMF), 67–87 (ISIK…GDII), 108–128 (GLIV…NIIW), 136–156 (LVFS…LVGA), 185–205 (VFPL…VPTV), 212–232 (ALIG…GFAM), and 246–266 (VLAV…IVLL).

It belongs to the UPF0761 family.

The protein resides in the cell inner membrane. The protein is UPF0761 membrane protein YPN_0254 of Yersinia pestis bv. Antiqua (strain Nepal516).